Consider the following 818-residue polypeptide: Sodium/hydrogen exchanger 1 (818 aa).

The Extracellular segment spans residues 1 to 98 (MLLWPGASGL…FPVLGIDYQH (98 aa)). The disordered stretch occupies residues 44–76 (STIRGSEPPRERSIGDVTTAPPELAPESRPVNH). N-linked (GlcNAc...) asparagine glycosylation occurs at Asn-75. A helical membrane pass occupies residues 99-121 (VRIPFEIALWILLACLMKIGFHV). Topologically, residues 122–130 (IPTISSIVP) are cytoplasmic. The helical transmembrane segment at 131 to 148 (ESCLLIVVGLLVGGLIKG) threads the bilayer. Over 149–158 (VGETPPILQS) the chain is Extracellular. The chain crosses the membrane as a helical span at residues 159–176 (EVFFLFLLPPIILDAGYF). Over 177–186 (LPLRQFTENL) the chain is Cytoplasmic. The chain crosses the membrane as a helical span at residues 187–215 (GTILIFAVVGTLWNAFFLGGLMYAVCLVG). The Extracellular portion of the chain corresponds to 216–222 (GEQINNI). The chain crosses the membrane as a helical span at residues 223-249 (GLLENLLFGSIISAVDPVAVLAVFEEI). Over 250-252 (HIN) the chain is Cytoplasmic. The helical transmembrane segment at 253 to 283 (ELLHILVFGESLLNDAVTVVLYHLFEEFANY) threads the bilayer. Topologically, residues 284–287 (DRVG) are extracellular. A helical membrane pass occupies residues 288–322 (IVDIILGFLSFFVVSLGGVFVGVVYGVIAAFTSRF). At 323–328 (TSHIRV) the chain is on the cytoplasmic side. A helical transmembrane segment spans residues 329-341 (IEPLFVFLYSYMA). The Extracellular portion of the chain corresponds to 342 to 350 (YLSAELFHL). Residues 351 to 371 (SGIMALIASGVVMRPYVEANI) form a helical membrane-spanning segment. The Cytoplasmic portion of the chain corresponds to 372–373 (SH). The helical transmembrane segment at 374-404 (KSHTTIKYFLKMWSSVSETLIFIFLGVSTVA) threads the bilayer. The Extracellular segment spans residues 405–410 (GSHHWN). A helical membrane pass occupies residues 411 to 438 (WTFVISTLLFCLIARVLGVLGLTWFINK). Residues 439-444 (FRIVKL) lie on the Cytoplasmic side of the membrane. Residues 445-469 (TPKDQFIIAYGGLRGAIAFSLGYLL) traverse the membrane as a helical segment. Residues 470–475 (DKKHFP) lie on the Extracellular side of the membrane. The helical transmembrane segment at 476–505 (MCDLFLTAIITVIFFTVFVQGMTIRPLVDL) threads the bilayer. The interaction with TESC stretch occupies residues 503–545 (VDLLAVKKKQETKRSINEEIHTQFLDHLLTGIEDICGHYGHHH). Topologically, residues 506 to 818 (LAVKKKQETK…EGEPFIPKGQ (313 aa)) are cytoplasmic. The tract at residues 509 to 516 (KKKQETKR) is PI(4,5)P2-binding region. The interaction with CHP2 stretch occupies residues 515 to 545 (KRSINEEIHTQFLDHLLTGIEDICGHYGHHH). The confers pH-dependent PI(4,5)P2 binding stretch occupies residues 540–545 (HYGHHH). The PI(4,5)P2-binding region stretch occupies residues 552 to 560 (RFNKKYVKK). Residues Ser-599 and Ser-602 each carry the phosphoserine modification. Phosphothreonine is present on Thr-603. Ser-605 and Ser-648 each carry phosphoserine. The interaction with TESC stretch occupies residues 633–818 (KILRNNLQKT…EGEPFIPKGQ (186 aa)). Positions 633-818 (KILRNNLQKT…EGEPFIPKGQ (186 aa)) are interaction with CALM1. The interaction with PPP3CA stretch occupies residues 684 to 687 (LTVP). A phosphoserine mark is found at Ser-693, Ser-697, and Ser-703. An interaction with PPP3CA region spans residues 715–720 (PVITID). Residues Ser-723, Ser-726, and Ser-729 each carry the phosphoserine modification. A disordered region spans residues 741–818 (VLGLSRDPGR…EGEPFIPKGQ (78 aa)). Thr-782 carries the phosphothreonine modification. A compositionally biased stretch (polar residues) spans 785 to 794 (PSDSPSSQRI). Phosphoserine occurs at positions 788, 790, and 799.

It belongs to the monovalent cation:proton antiporter 1 (CPA1) transporter (TC 2.A.36) family. Homodimer; dimerization is crucial for its function. Oligomer. Interacts with CALM in a calcium-dependent manner. Interacts with TESC. Interacts (via the juxtamembrane region of the cytoplasmic C-terminal domain) with CHP1; the interaction occurs at the plasma membrane in a calcium-dependent manner. Interacts with CHP2; the interaction occurs in a calcium-dependent manner. Interacts with EZR; regulates the cytoskeletal interactions of SLC9A1 and promotes stress fiber formation. In terms of processing, ubiquitinated, leading to its degradation by the proteasome. Ubiquitination is reduced by CHP1. Post-translationally, O-glycosylated. Palmitoylated; may play a major role in SLC9A1 regulation. In terms of processing, phosphorylation at Thr-782 increases SLC9A1 activity. Specifically dephosphorylated at Thr-782 by PPP3CA that negatively regulates SLC9A1 activity. Phosphorylation at Ser-648 by AKT1 reduces SLC9A1 binding to CALM1.

It localises to the cell membrane. It is found in the basolateral cell membrane. The catalysed reaction is Na(+)(in) + H(+)(out) = Na(+)(out) + H(+)(in). The enzyme catalyses Li(+)(out) + H(+)(in) = Li(+)(in) + H(+)(out). It catalyses the reaction Li(+)(in) + Na(+)(out) = Li(+)(out) + Na(+)(in). With respect to regulation, activated at acidic pHs. Inhibited by amiloride and 5-amino-substituted derivatives. Inhibited by cariporide and eniporide. Phosphatidylinositol 4,5-bisphosphate (PI(4,5)P2) and phosphatidylinositol 3,4,5-trisphosphate (PI(3,4,5)P3) bind and differentially regulate SLC9A1 activity. Functionally, electroneutral Na(+) /H(+) antiporter that extrudes Na(+) in exchange for external protons driven by the inward sodium ion chemical gradient, protecting cells from acidification that occurs from metabolism. Exchanges intracellular H(+) ions for extracellular Na(+) in 1:1 stoichiometry. Plays a key role in maintening intracellular pH neutral and cell volume, and thus is important for cell growth, proliferation, migration and survival. In addition, can transport lithium Li(+) and also functions as a Na(+)/Li(+) antiporter. SLC9A1 also functions in membrane anchoring and organization of scaffolding complexes that coordinate signaling inputs. This Bos taurus (Bovine) protein is Sodium/hydrogen exchanger 1 (SLC9A1).